A 430-amino-acid polypeptide reads, in one-letter code: Enolase (430 aa).

(2R)-2-phosphoglycerate is bound at residue glutamine 168. Glutamate 210 (proton donor) is an active-site residue. Mg(2+) is bound by residues aspartate 247, glutamate 288, and aspartate 315. Lysine 340, arginine 369, serine 370, and lysine 391 together coordinate (2R)-2-phosphoglycerate. The active-site Proton acceptor is lysine 340.

The protein belongs to the enolase family. Mg(2+) serves as cofactor.

The protein resides in the cytoplasm. It is found in the secreted. The protein localises to the cell surface. The catalysed reaction is (2R)-2-phosphoglycerate = phosphoenolpyruvate + H2O. Its pathway is carbohydrate degradation; glycolysis; pyruvate from D-glyceraldehyde 3-phosphate: step 4/5. Catalyzes the reversible conversion of 2-phosphoglycerate (2-PG) into phosphoenolpyruvate (PEP). It is essential for the degradation of carbohydrates via glycolysis. The polypeptide is Enolase (Rippkaea orientalis (strain PCC 8801 / RF-1) (Cyanothece sp. (strain PCC 8801))).